Here is a 379-residue protein sequence, read N- to C-terminus: Protein COS4 (379 aa).

Transmembrane regions (helical) follow at residues 43 to 63 (IYKSLAFRIWMLLWLPLSVWW), 70 to 90 (IYPLMVSLLVLFWGPVFVLVI), 233 to 253 (ISNIFMLIPFLNFLCCIYVSR), and 255 to 275 (MCLLLRTLYLGWILFMLVQGF).

It belongs to the DUP/COS family.

The protein localises to the membrane. In Saccharomyces cerevisiae (strain ATCC 204508 / S288c) (Baker's yeast), this protein is Protein COS4 (COS4).